A 202-amino-acid chain; its full sequence is Pyridoxal 5'-phosphate synthase subunit PdxT (202 aa).

49 to 51 (GES) serves as a coordination point for L-glutamine. C81 functions as the Nucleophile in the catalytic mechanism. Residues R110 and 139 to 140 (IR) contribute to the L-glutamine site. Residues H182 and E184 each act as charge relay system in the active site.

The protein belongs to the glutaminase PdxT/SNO family. In the presence of PdxS, forms a dodecamer of heterodimers. Only shows activity in the heterodimer.

The enzyme catalyses aldehydo-D-ribose 5-phosphate + D-glyceraldehyde 3-phosphate + L-glutamine = pyridoxal 5'-phosphate + L-glutamate + phosphate + 3 H2O + H(+). It catalyses the reaction L-glutamine + H2O = L-glutamate + NH4(+). It functions in the pathway cofactor biosynthesis; pyridoxal 5'-phosphate biosynthesis. Catalyzes the hydrolysis of glutamine to glutamate and ammonia as part of the biosynthesis of pyridoxal 5'-phosphate. The resulting ammonia molecule is channeled to the active site of PdxS. This Rhodococcus jostii (strain RHA1) protein is Pyridoxal 5'-phosphate synthase subunit PdxT.